Consider the following 651-residue polypeptide: Peptide-N(4)-(N-acetyl-beta-glucosaminyl)asparagine amidase (651 aa).

Ala-2 is modified (N-acetylalanine). The PUB domain occupies Glu-30–Lys-91. The disordered stretch occupies residues Ser-116–Pro-153. Residues Met-143–Gln-152 show a composition bias toward polar residues. 4 residues coordinate Zn(2+): Cys-247, Cys-250, Cys-280, and Cys-283. Catalysis depends on Cys-306, which acts as the Nucleophile. Active-site residues include His-333 and Asp-350. The 201-residue stretch at Glu-451–Leu-651 folds into the PAW domain.

Belongs to the transglutaminase-like superfamily. PNGase family. In terms of assembly, component of a complex required to couple retrotranslocation, ubiquitination and deglycosylation composed of NGLY1, SAKS1, AMFR, VCP and RAD23B. Interacts with the proteasome components RAD23B and PSMC1. Interacts with directly with VCP. Interacts with DERL1, bringing it close to the endoplasmic reticulum membrane. Interacts with SAKS1. It depends on Zn(2+) as a cofactor.

It is found in the cytoplasm. It catalyses the reaction Hydrolysis of an N(4)-(acetyl-beta-D-glucosaminyl)asparagine residue in which the glucosamine residue may be further glycosylated, to yield a (substituted) N-acetyl-beta-D-glucosaminylamine and a peptide containing an aspartate residue.. Inhibited by Z-VAD-fmk, a well-known caspase inhibitor, which inhibits enzyme activity through covalent binding of the carbohydrate to the single Cys-306 residue. Its function is as follows. Specifically deglycosylates the denatured form of N-linked glycoproteins in the cytoplasm and assists their proteasome-mediated degradation. Cleaves the beta-aspartyl-glucosamine (GlcNAc) of the glycan and the amide side chain of Asn, converting Asn to Asp. Prefers proteins containing high-mannose over those bearing complex type oligosaccharides. Can recognize misfolded proteins in the endoplasmic reticulum that are exported to the cytosol to be destroyed and deglycosylate them, while it has no activity toward native proteins. Deglycosylation is a prerequisite for subsequent proteasome-mediated degradation of some, but not all, misfolded glycoproteins. The chain is Peptide-N(4)-(N-acetyl-beta-glucosaminyl)asparagine amidase (Ngly1) from Rattus norvegicus (Rat).